The primary structure comprises 209 residues: Thiamine-phosphate synthase (209 aa).

Residues 36–40 (QYRDK) and Asn68 each bind 4-amino-2-methyl-5-(diphosphooxymethyl)pyrimidine. Residues Asp69 and Asp87 each contribute to the Mg(2+) site. Thr106 serves as a coordination point for 4-amino-2-methyl-5-(diphosphooxymethyl)pyrimidine. 133–135 (SST) is a binding site for 2-[(2R,5Z)-2-carboxy-4-methylthiazol-5(2H)-ylidene]ethyl phosphate. A 4-amino-2-methyl-5-(diphosphooxymethyl)pyrimidine-binding site is contributed by Lys136. Gly163 provides a ligand contact to 2-[(2R,5Z)-2-carboxy-4-methylthiazol-5(2H)-ylidene]ethyl phosphate.

The protein belongs to the thiamine-phosphate synthase family. Requires Mg(2+) as cofactor.

It catalyses the reaction 2-[(2R,5Z)-2-carboxy-4-methylthiazol-5(2H)-ylidene]ethyl phosphate + 4-amino-2-methyl-5-(diphosphooxymethyl)pyrimidine + 2 H(+) = thiamine phosphate + CO2 + diphosphate. It carries out the reaction 2-(2-carboxy-4-methylthiazol-5-yl)ethyl phosphate + 4-amino-2-methyl-5-(diphosphooxymethyl)pyrimidine + 2 H(+) = thiamine phosphate + CO2 + diphosphate. The catalysed reaction is 4-methyl-5-(2-phosphooxyethyl)-thiazole + 4-amino-2-methyl-5-(diphosphooxymethyl)pyrimidine + H(+) = thiamine phosphate + diphosphate. It participates in cofactor biosynthesis; thiamine diphosphate biosynthesis; thiamine phosphate from 4-amino-2-methyl-5-diphosphomethylpyrimidine and 4-methyl-5-(2-phosphoethyl)-thiazole: step 1/1. Its function is as follows. Condenses 4-methyl-5-(beta-hydroxyethyl)thiazole monophosphate (THZ-P) and 2-methyl-4-amino-5-hydroxymethyl pyrimidine pyrophosphate (HMP-PP) to form thiamine monophosphate (TMP). The sequence is that of Thiamine-phosphate synthase from Pseudomonas aeruginosa (strain LESB58).